The following is a 51-amino-acid chain: Large ribosomal subunit protein bL33 (51 aa).

Belongs to the bacterial ribosomal protein bL33 family.

The polypeptide is Large ribosomal subunit protein bL33 (Vesicomyosocius okutanii subsp. Calyptogena okutanii (strain HA)).